A 54-amino-acid polypeptide reads, in one-letter code: Ovomucoid (54 aa).

The Kazal-like domain maps to 4–54 (VNCSDYPKPVCSLLYMPLCGSDNKTYGNKCNFCNAVADSNGTLTLSHFGKC). 3 cysteine pairs are disulfide-bonded: Cys-6–Cys-36, Cys-14–Cys-33, and Cys-22–Cys-54. Residue Asn-43 is glycosylated (N-linked (GlcNAc...) asparagine).

The protein localises to the secreted. The protein is Ovomucoid of Geococcyx californianus (Greater roadrunner).